Consider the following 407-residue polypeptide: Bifunctional enzyme IspD/IspF (407 aa).

Positions M1 to I246 are 2-C-methyl-D-erythritol 4-phosphate cytidylyltransferase. A 2-C-methyl-D-erythritol 2,4-cyclodiphosphate synthase region spans residues R247 to E407. A divalent metal cation contacts are provided by D253 and H255. 4-CDP-2-C-methyl-D-erythritol 2-phosphate contacts are provided by residues D253–H255 and H279–S280. Residue H287 participates in a divalent metal cation binding. Residues D301–G303, T377–E380, F384, and R387 each bind 4-CDP-2-C-methyl-D-erythritol 2-phosphate.

This sequence in the N-terminal section; belongs to the IspD/TarI cytidylyltransferase family. IspD subfamily. It in the C-terminal section; belongs to the IspF family. It depends on a divalent metal cation as a cofactor.

It catalyses the reaction 2-C-methyl-D-erythritol 4-phosphate + CTP + H(+) = 4-CDP-2-C-methyl-D-erythritol + diphosphate. It carries out the reaction 4-CDP-2-C-methyl-D-erythritol 2-phosphate = 2-C-methyl-D-erythritol 2,4-cyclic diphosphate + CMP. Its pathway is isoprenoid biosynthesis; isopentenyl diphosphate biosynthesis via DXP pathway; isopentenyl diphosphate from 1-deoxy-D-xylulose 5-phosphate: step 2/6. The protein operates within isoprenoid biosynthesis; isopentenyl diphosphate biosynthesis via DXP pathway; isopentenyl diphosphate from 1-deoxy-D-xylulose 5-phosphate: step 4/6. Its function is as follows. Bifunctional enzyme that catalyzes the formation of 4-diphosphocytidyl-2-C-methyl-D-erythritol from CTP and 2-C-methyl-D-erythritol 4-phosphate (MEP) (IspD), and catalyzes the conversion of 4-diphosphocytidyl-2-C-methyl-D-erythritol 2-phosphate (CDP-ME2P) to 2-C-methyl-D-erythritol 2,4-cyclodiphosphate (ME-CPP) with a corresponding release of cytidine 5-monophosphate (CMP) (IspF). The sequence is that of Bifunctional enzyme IspD/IspF from Mesorhizobium japonicum (strain LMG 29417 / CECT 9101 / MAFF 303099) (Mesorhizobium loti (strain MAFF 303099)).